The following is a 431-amino-acid chain: O-phosphoseryl-tRNA(Sec) selenium transferase (431 aa).

Residues 1-36 (MRGLIPDHMLERGRTVLDSYREPVERLLSERRMPEE) form a tetramerization region. Arg67 serves as a coordination point for pyridoxal 5'-phosphate. The interval 88–98 (GRSGTLVDPQP) is phosphate loop (P-loop). Substrate contacts are provided by Arg89, Ser90, and Gln97. At Lys269 the chain carries N6-(pyridoxal phosphate)lysine. Arg298 serves as a coordination point for substrate.

Belongs to the SepSecS family. As to quaternary structure, homotetramer. Pyridoxal 5'-phosphate is required as a cofactor.

The enzyme catalyses O-phospho-L-seryl-tRNA(Sec) + selenophosphate + H2O = L-selenocysteinyl-tRNA(Sec) + 2 phosphate. Its pathway is aminoacyl-tRNA biosynthesis; selenocysteinyl-tRNA(Sec) biosynthesis; selenocysteinyl-tRNA(Sec) from L-seryl-tRNA(Sec) (archaeal/eukaryal route): step 2/2. In terms of biological role, converts O-phosphoseryl-tRNA(Sec) to selenocysteinyl-tRNA(Sec) required for selenoprotein biosynthesis. The sequence is that of O-phosphoseryl-tRNA(Sec) selenium transferase (spcS) from Methanopyrus kandleri (strain AV19 / DSM 6324 / JCM 9639 / NBRC 100938).